The chain runs to 288 residues: Protoheme IX farnesyltransferase 2 (288 aa).

8 consecutive transmembrane segments (helical) span residues I16 to P36, F38 to F58, L88 to A108, W111 to L131, I139 to P159, L166 to A186, A227 to L247, and F266 to L286.

This sequence belongs to the UbiA prenyltransferase family. Protoheme IX farnesyltransferase subfamily.

The protein localises to the cell inner membrane. It carries out the reaction heme b + (2E,6E)-farnesyl diphosphate + H2O = Fe(II)-heme o + diphosphate. The protein operates within porphyrin-containing compound metabolism; heme O biosynthesis; heme O from protoheme: step 1/1. Its function is as follows. Converts heme B (protoheme IX) to heme O by substitution of the vinyl group on carbon 2 of heme B porphyrin ring with a hydroxyethyl farnesyl side group. The protein is Protoheme IX farnesyltransferase 2 of Paramagnetospirillum magneticum (strain ATCC 700264 / AMB-1) (Magnetospirillum magneticum).